A 421-amino-acid chain; its full sequence is Histidine--tRNA ligase (421 aa).

Belongs to the class-II aminoacyl-tRNA synthetase family. In terms of assembly, homodimer.

It is found in the cytoplasm. It catalyses the reaction tRNA(His) + L-histidine + ATP = L-histidyl-tRNA(His) + AMP + diphosphate + H(+). This Natranaerobius thermophilus (strain ATCC BAA-1301 / DSM 18059 / JW/NM-WN-LF) protein is Histidine--tRNA ligase.